The chain runs to 370 residues: Flagellar P-ring protein (370 aa).

The signal sequence occupies residues 1–24 (MTLSKWILSFGLSVCLIVSHPVSA).

Belongs to the FlgI family. In terms of assembly, the basal body constitutes a major portion of the flagellar organelle and consists of four rings (L,P,S, and M) mounted on a central rod.

Its subcellular location is the periplasm. It localises to the bacterial flagellum basal body. Functionally, assembles around the rod to form the L-ring and probably protects the motor/basal body from shearing forces during rotation. This Nitrosomonas europaea (strain ATCC 19718 / CIP 103999 / KCTC 2705 / NBRC 14298) protein is Flagellar P-ring protein.